We begin with the raw amino-acid sequence, 317 residues long: 4-hydroxy-3-methylbut-2-enyl diphosphate reductase (317 aa).

C12 contributes to the [4Fe-4S] cluster binding site. (2E)-4-hydroxy-3-methylbut-2-enyl diphosphate-binding residues include H41 and H74. Positions 41 and 74 each coordinate dimethylallyl diphosphate. Isopentenyl diphosphate is bound by residues H41 and H74. C97 serves as a coordination point for [4Fe-4S] cluster. Position 125 (H125) interacts with (2E)-4-hydroxy-3-methylbut-2-enyl diphosphate. Dimethylallyl diphosphate is bound at residue H125. H125 provides a ligand contact to isopentenyl diphosphate. The Proton donor role is filled by E127. T168 contributes to the (2E)-4-hydroxy-3-methylbut-2-enyl diphosphate binding site. C198 is a [4Fe-4S] cluster binding site. S226, S227, N228, and S270 together coordinate (2E)-4-hydroxy-3-methylbut-2-enyl diphosphate. Dimethylallyl diphosphate is bound by residues S226, S227, N228, and S270. S226, S227, N228, and S270 together coordinate isopentenyl diphosphate.

It belongs to the IspH family. Homodimer. The cofactor is [4Fe-4S] cluster.

The enzyme catalyses isopentenyl diphosphate + 2 oxidized [2Fe-2S]-[ferredoxin] + H2O = (2E)-4-hydroxy-3-methylbut-2-enyl diphosphate + 2 reduced [2Fe-2S]-[ferredoxin] + 2 H(+). The catalysed reaction is dimethylallyl diphosphate + 2 oxidized [2Fe-2S]-[ferredoxin] + H2O = (2E)-4-hydroxy-3-methylbut-2-enyl diphosphate + 2 reduced [2Fe-2S]-[ferredoxin] + 2 H(+). It participates in isoprenoid biosynthesis; dimethylallyl diphosphate biosynthesis; dimethylallyl diphosphate from (2E)-4-hydroxy-3-methylbutenyl diphosphate: step 1/1. Its pathway is isoprenoid biosynthesis; isopentenyl diphosphate biosynthesis via DXP pathway; isopentenyl diphosphate from 1-deoxy-D-xylulose 5-phosphate: step 6/6. In terms of biological role, catalyzes the conversion of 1-hydroxy-2-methyl-2-(E)-butenyl 4-diphosphate (HMBPP) into a mixture of isopentenyl diphosphate (IPP) and dimethylallyl diphosphate (DMAPP). Acts in the terminal step of the DOXP/MEP pathway for isoprenoid precursor biosynthesis. This chain is 4-hydroxy-3-methylbut-2-enyl diphosphate reductase, found in Yersinia pseudotuberculosis serotype O:1b (strain IP 31758).